The sequence spans 189 residues: Chitin synthase 2 (189 aa).

It belongs to the chitin synthase family. Class II subfamily.

The protein resides in the cell membrane. It catalyses the reaction [(1-&gt;4)-N-acetyl-beta-D-glucosaminyl](n) + UDP-N-acetyl-alpha-D-glucosamine = [(1-&gt;4)-N-acetyl-beta-D-glucosaminyl](n+1) + UDP + H(+). Its function is as follows. Polymerizes chitin, a structural polymer of the cell wall and septum, by transferring the sugar moiety of UDP-GlcNAc to the non-reducing end of the growing chitin polymer. The sequence is that of Chitin synthase 2 (CHS2) from Xylohypha bantiana.